Here is a 327-residue protein sequence, read N- to C-terminus: Zinc finger protein 444 (327 aa).

Residue Met1 is modified to N-acetylmethionine. Lys8 is covalently cross-linked (Glycyl lysine isopeptide (Lys-Gly) (interchain with G-Cter in SUMO2)). Ser18 and Ser104 each carry phosphoserine. The SCAN box domain occupies 20–104 (WHRFRRFHLG…LEELWGPAAS (85 aa)). The interval 101 to 171 (PAASPDGSSA…SPPLAPGLPA (71 aa)) is disordered. Polar residues predominate over residues 106-118 (DGSSATRVPQDVT). Positions 134–148 (PLAGTAPGAEGPAPG) are enriched in low complexity. 2 consecutive C2H2-type zinc fingers follow at residues 179 to 201 (TSCP…RQSH) and 207 to 229 (HACP…RDTH). Lys190 is covalently cross-linked (Glycyl lysine isopeptide (Lys-Gly) (interchain with G-Cter in SUMO2)). The interval 220–243 (EHLRRHRDTHPGSPGSPGPALRPL) is disordered. Phosphoserine is present on Ser235. 2 consecutive C2H2-type zinc fingers follow at residues 250–272 (HACC…RKTH) and 278–300 (FACW…QRIH). The segment covering 305 to 314 (ASAQGAVAPG) has biased composition (low complexity). The segment at 305–327 (ASAQGAVAPGPDGGGPFPPWPLG) is disordered.

Belongs to the krueppel C2H2-type zinc-finger protein family.

Its subcellular location is the nucleus. Its function is as follows. Transcriptional regulator. Binds to the 5'-flanking critical region of the SCARF1 promoter. This chain is Zinc finger protein 444 (ZNF444), found in Homo sapiens (Human).